The primary structure comprises 549 residues: Cation/acetate symporter ActP (549 aa).

Helical transmembrane passes span 33 to 53, 77 to 97, 103 to 123, 148 to 168, 183 to 203, 206 to 226, 262 to 282, 303 to 323, 355 to 375, 404 to 424, 428 to 448, 464 to 484, and 493 to 513; these read WQAI…TYWA, LAIA…ALVF, GLIY…LIAE, ILSA…QMVG, IAVV…GMLA, WVQI…AFMV, ISAL…PHIL, GFMG…IMLV, LFLG…VAGL, VSKI…ILFE, IAFM…PIIL, GGWL…TIWV, and IFPY…GIWF.

Belongs to the sodium:solute symporter (SSF) (TC 2.A.21) family.

The protein localises to the cell inner membrane. Its function is as follows. Transports acetate. The polypeptide is Cation/acetate symporter ActP (Salmonella newport (strain SL254)).